Reading from the N-terminus, the 89-residue chain is Neuropeptide S (89 aa).

An N-terminal signal peptide occupies residues 1-23 (MIGSLKLSFVLALSLSVMHVLWC). Residues 24–69 (YPVLSSKVPGKPDYFLILLSSCPARLEGSDRLAFLKPILEKTSMKR) constitute a propeptide that is removed on maturation.

The protein resides in the secreted. May play an important anorexigenic role. Modulates arousal and anxiety as well as increases locomotor activity. Binds to its receptor NPSR1 with nanomolar affinity to increase intracellular calcium concentrations. The chain is Neuropeptide S (Nps) from Mus musculus (Mouse).